A 66-amino-acid polypeptide reads, in one-letter code: Large ribosomal subunit protein bL35 (66 aa).

2 stretches are compositionally biased toward basic residues: residues 1-16 and 38-49; these read MPKM…RVKR and TKQKRQLRKARL. A disordered region spans residues 1–49; the sequence is MPKMKTHRGAAKRVKRTASGQLKRSRAFTSHLFANKSTKQKRQLRKARL.

It belongs to the bacterial ribosomal protein bL35 family.

The chain is Large ribosomal subunit protein bL35 from Staphylococcus aureus (strain MSSA476).